A 437-amino-acid chain; its full sequence is Glutamate-1-semialdehyde 2,1-aminomutase (437 aa).

An N6-(pyridoxal phosphate)lysine modification is found at K277.

The protein belongs to the class-III pyridoxal-phosphate-dependent aminotransferase family. HemL subfamily. As to quaternary structure, homodimer. Pyridoxal 5'-phosphate serves as cofactor.

The protein resides in the cytoplasm. The catalysed reaction is (S)-4-amino-5-oxopentanoate = 5-aminolevulinate. It participates in porphyrin-containing compound metabolism; protoporphyrin-IX biosynthesis; 5-aminolevulinate from L-glutamyl-tRNA(Glu): step 2/2. The protein operates within porphyrin-containing compound metabolism; chlorophyll biosynthesis. The chain is Glutamate-1-semialdehyde 2,1-aminomutase from Thermosynechococcus vestitus (strain NIES-2133 / IAM M-273 / BP-1).